The following is a 471-amino-acid chain: UDP-N-acetylmuramate--L-alanine ligase (471 aa).

114 to 120 (GTHGKTT) contributes to the ATP binding site.

It belongs to the MurCDEF family.

It localises to the cytoplasm. The catalysed reaction is UDP-N-acetyl-alpha-D-muramate + L-alanine + ATP = UDP-N-acetyl-alpha-D-muramoyl-L-alanine + ADP + phosphate + H(+). The protein operates within cell wall biogenesis; peptidoglycan biosynthesis. Functionally, cell wall formation. The sequence is that of UDP-N-acetylmuramate--L-alanine ligase from Agrobacterium fabrum (strain C58 / ATCC 33970) (Agrobacterium tumefaciens (strain C58)).